The following is a 92-amino-acid chain: C-C motif chemokine 4 (92 aa).

The first 23 residues, 1–23 (MKLGVTVLSVALLVAALCPPALS), serve as a signal peptide directing secretion. 2 disulfide bridges follow: C34–C58 and C35–C74.

It belongs to the intercrine beta (chemokine CC) family. Homodimer.

It localises to the secreted. Functionally, monokine with inflammatory and chemokinetic properties. This Oryctolagus cuniculus (Rabbit) protein is C-C motif chemokine 4 (CCL4).